A 196-amino-acid chain; its full sequence is Probable GTP-binding protein EngB (196 aa).

One can recognise an EngB-type G domain in the interval 24–196 (ELSEVALSGR…IWNLIEPYIS (173 aa)). GTP contacts are provided by residues 32-39 (GRSNVGKS), 59-63 (GKTQT), 77-80 (DVPG), 144-147 (TKED), and 176-178 (YSS). Positions 39 and 61 each coordinate Mg(2+).

This sequence belongs to the TRAFAC class TrmE-Era-EngA-EngB-Septin-like GTPase superfamily. EngB GTPase family. Requires Mg(2+) as cofactor.

Functionally, necessary for normal cell division and for the maintenance of normal septation. This chain is Probable GTP-binding protein EngB, found in Staphylococcus aureus (strain Mu3 / ATCC 700698).